We begin with the raw amino-acid sequence, 236 residues long: Small ribosomal subunit protein uS3 (236 aa).

One can recognise a KH type-2 domain in the interval 39 to 107 (VREFLKKSLS…PAQISITEIK (69 aa)).

This sequence belongs to the universal ribosomal protein uS3 family. Part of the 30S ribosomal subunit. Forms a tight complex with proteins S10 and S14.

Its function is as follows. Binds the lower part of the 30S subunit head. Binds mRNA in the 70S ribosome, positioning it for translation. The polypeptide is Small ribosomal subunit protein uS3 (Wigglesworthia glossinidia brevipalpis).